The sequence spans 282 residues: Elongation factor Ts (282 aa).

An involved in Mg(2+) ion dislocation from EF-Tu region spans residues 80–83 (TDFV).

This sequence belongs to the EF-Ts family.

It is found in the cytoplasm. Functionally, associates with the EF-Tu.GDP complex and induces the exchange of GDP to GTP. It remains bound to the aminoacyl-tRNA.EF-Tu.GTP complex up to the GTP hydrolysis stage on the ribosome. The polypeptide is Elongation factor Ts (Chlamydia caviae (strain ATCC VR-813 / DSM 19441 / 03DC25 / GPIC) (Chlamydophila caviae)).